The primary structure comprises 225 residues: Methylthioribulose-1-phosphate dehydratase (225 aa).

Zn(2+)-binding residues include His-106 and His-108.

It belongs to the aldolase class II family. MtnB subfamily. It depends on Zn(2+) as a cofactor.

It catalyses the reaction 5-(methylsulfanyl)-D-ribulose 1-phosphate = 5-methylsulfanyl-2,3-dioxopentyl phosphate + H2O. It participates in amino-acid biosynthesis; L-methionine biosynthesis via salvage pathway; L-methionine from S-methyl-5-thio-alpha-D-ribose 1-phosphate: step 2/6. Functionally, catalyzes the dehydration of methylthioribulose-1-phosphate (MTRu-1-P) into 2,3-diketo-5-methylthiopentyl-1-phosphate (DK-MTP-1-P). The polypeptide is Methylthioribulose-1-phosphate dehydratase (Xanthomonas oryzae pv. oryzae (strain PXO99A)).